Here is a 148-residue protein sequence, read N- to C-terminus: MCGIMRVYRVYNAYKIVGAVIFSMSIIVILYISIILHSLKLSFSIILAVDILIIALFAYIFLKPKKLVVLDNGIKVDNEFYSWDEVIEFFVSLNSIQINLKGKREETFNWETPGLFKYRPQIEYVVKKDAELLKILREKIENKERKRG.

Helical transmembrane passes span 16 to 36 (IVGAVIFSMSIIVILYISIIL) and 41 to 61 (LSFSIILAVDILIIALFAYIF).

To M.jannaschii MJ0696.

The protein resides in the cell membrane. This is an uncharacterized protein from Methanocaldococcus jannaschii (strain ATCC 43067 / DSM 2661 / JAL-1 / JCM 10045 / NBRC 100440) (Methanococcus jannaschii).